We begin with the raw amino-acid sequence, 670 residues long: Probable leucine-rich repeat receptor-like protein kinase At1g68400 (670 aa).

The signal sequence occupies residues 1–29 (MAKSSFFNKHLLLSLLILLQSCLLSSSSS). Residues 30–274 (TDSETLLNFK…KSNNTSRIST (245 aa)) lie on the Extracellular side of the membrane. Residues asparagine 52, asparagine 79, asparagine 102, asparagine 109, and asparagine 112 are each glycosylated (N-linked (GlcNAc...) asparagine). 6 LRR repeats span residues 69–91 (RVTRLVLEDINLTGSISSLTSLT), 92–114 (SLRVLSLKHNNLSGPIPNLSNLT), 115–137 (ALKLLFLSNNQFSGNFPTSITSL), 139–162 (RLYRLDLSFNNFSGQIPPDLTDLT), 163–185 (HLLTLRLESNRFSGQIPNINLSD), and 186–207 (LQDFNVSGNNFNGQIPNSLSQF). N-linked (GlcNAc...) asparagine glycans are attached at residues asparagine 149, asparagine 182, and asparagine 190. Residues 230 to 266 (SSDPTKPGRPDEAKASPLNKPETVPSSPTSIHGGDKS) form a disordered region. The segment covering 253–266 (VPSSPTSIHGGDKS) has biased composition (polar residues). N-linked (GlcNAc...) asparagine glycosylation occurs at asparagine 268. Residues 275–295 (ISLIAIILGDFIILSFVSLLL) traverse the membrane as a helical segment. Residues 296–670 (YYCFWRQYAV…EDTCGGTTSQ (375 aa)) lie on the Cytoplasmic side of the membrane. The region spanning 362–636 (RASAEMLGKG…GHVVKLIEDI (275 aa)) is the Protein kinase domain. Phosphoserine is present on serine 364. ATP contacts are provided by residues 368–376 (LGKGGFGTA) and lysine 390. The residue at position 443 (serine 443) is a Phosphoserine. The residue at position 463 (threonine 463) is a Phosphothreonine. Aspartate 491 acts as the Proton acceptor in catalysis. A Phosphothreonine modification is found at threonine 616.

The protein belongs to the protein kinase superfamily. Ser/Thr protein kinase family.

It localises to the cell membrane. It carries out the reaction L-seryl-[protein] + ATP = O-phospho-L-seryl-[protein] + ADP + H(+). The enzyme catalyses L-threonyl-[protein] + ATP = O-phospho-L-threonyl-[protein] + ADP + H(+). The polypeptide is Probable leucine-rich repeat receptor-like protein kinase At1g68400 (Arabidopsis thaliana (Mouse-ear cress)).